The primary structure comprises 164 residues: Transcriptional repressor NrdR (164 aa).

Residues 3 to 34 fold into a zinc finger; it reads CPKCNYHKSSVVDSRQAEDGNTIRRRRECEQC. The region spanning 49-139 is the ATP-cone domain; sequence LLVIKKDGTR…VYKSFKDVDE (91 aa).

The protein belongs to the NrdR family. Requires Zn(2+) as cofactor.

Its function is as follows. Negatively regulates transcription of bacterial ribonucleotide reductase nrd genes and operons by binding to NrdR-boxes. The polypeptide is Transcriptional repressor NrdR (Streptococcus pyogenes serotype M6 (strain ATCC BAA-946 / MGAS10394)).